Consider the following 511-residue polypeptide: Maturase K (511 aa).

This sequence belongs to the intron maturase 2 family. MatK subfamily.

The protein localises to the plastid. Its subcellular location is the chloroplast. Usually encoded in the trnK tRNA gene intron. Probably assists in splicing its own and other chloroplast group II introns. The polypeptide is Maturase K (Brachypodium sylvaticum (False brome)).